Reading from the N-terminus, the 65-residue chain is Large ribosomal subunit protein bL35 (65 aa).

Composition is skewed to basic residues over residues M1–T15 and Q26–L44. The segment at M1–A65 is disordered.

The protein belongs to the bacterial ribosomal protein bL35 family.

This chain is Large ribosomal subunit protein bL35, found in Cupriavidus metallidurans (strain ATCC 43123 / DSM 2839 / NBRC 102507 / CH34) (Ralstonia metallidurans).